The primary structure comprises 90 residues: Large ribosomal subunit protein uL23c (90 aa).

This sequence belongs to the universal ribosomal protein uL23 family. In terms of assembly, part of the 50S ribosomal subunit.

The protein localises to the plastid. It is found in the chloroplast. In terms of biological role, binds to 23S rRNA. The polypeptide is Large ribosomal subunit protein uL23c (rpl23) (Psilotum nudum (Whisk fern)).